Here is an 86-residue protein sequence, read N- to C-terminus: Large ribosomal subunit protein bL31B (86 aa).

The protein belongs to the bacterial ribosomal protein bL31 family. Type B subfamily. Part of the 50S ribosomal subunit.

In Streptococcus agalactiae serotype Ia (strain ATCC 27591 / A909 / CDC SS700), this protein is Large ribosomal subunit protein bL31B.